The following is a 105-amino-acid chain: uncharacterized protein (105 aa).

This is an uncharacterized protein from Bacillus phage SPbeta (Bacillus phage SPBc2).